The sequence spans 132 residues: Small ribosomal subunit protein uS8 (132 aa).

It belongs to the universal ribosomal protein uS8 family. Part of the 30S ribosomal subunit. Contacts proteins S5 and S12.

In terms of biological role, one of the primary rRNA binding proteins, it binds directly to 16S rRNA central domain where it helps coordinate assembly of the platform of the 30S subunit. This is Small ribosomal subunit protein uS8 from Anaplasma marginale (strain Florida).